Here is a 272-residue protein sequence, read N- to C-terminus: Shikimate dehydrogenase (NADP(+)) (272 aa).

Shikimate-binding positions include 14-16 (SKS) and Thr61. Lys65 serves as the catalytic Proton acceptor. NADP(+) is bound at residue Glu77. Positions 86 and 102 each coordinate shikimate. NADP(+)-binding positions include 126 to 130 (GAGGA), 149 to 154 (NRTVSR), and Met213. Tyr215 contacts shikimate. Position 237 (Gly237) interacts with NADP(+).

This sequence belongs to the shikimate dehydrogenase family. In terms of assembly, homodimer.

It catalyses the reaction shikimate + NADP(+) = 3-dehydroshikimate + NADPH + H(+). It functions in the pathway metabolic intermediate biosynthesis; chorismate biosynthesis; chorismate from D-erythrose 4-phosphate and phosphoenolpyruvate: step 4/7. Its function is as follows. Involved in the biosynthesis of the chorismate, which leads to the biosynthesis of aromatic amino acids. Catalyzes the reversible NADPH linked reduction of 3-dehydroshikimate (DHSA) to yield shikimate (SA). The polypeptide is Shikimate dehydrogenase (NADP(+)) (Escherichia coli O6:K15:H31 (strain 536 / UPEC)).